The chain runs to 497 residues: MTSKNILNKNNCYDAILVGAGIMSGTLALLITEILPTIKILIIEKLNKPGSESTGAFNNAGTGHAANCELNYTPVDENGDLQIDKALFINRSFENSMSLWASLYSKGKIDIKKFLKFIPHISFVTGTENISFLKKRFKAMSKYPEFADMEFSSSFNQIKSWAPLITTCRDPLDKVAATRIKRGTDINFQALTREYLTYISKNKNVEIFYNTELIDLKKTDKKQWKLKVRSLGKIVSLNTSYVFLGAGGKTINFLQKSKIPEAKIYGGFPVSGKWLICEEKSLTEKHNAKVYGKADIGSPPMSVPHLDTRWIEGKKFLLYGPFAGFTTKFLKKGSYLDLFSSIKKSNLFSMLDVGIKNNELINYLFSQSFKSHNSRVENLRNMMPSAEPSNWYLENAGQRVQIIKKTKDGGSLQFGTEIVNSGDGSLSALLGASPGASTAVSIMIEVLKKSCLFNADKFELEKKLSNLLYESEIKNESDNNFLEIIKKRNNSILGFHP.

Belongs to the MQO family. The cofactor is FAD.

It catalyses the reaction (S)-malate + a quinone = a quinol + oxaloacetate. It participates in carbohydrate metabolism; tricarboxylic acid cycle; oxaloacetate from (S)-malate (quinone route): step 1/1. The sequence is that of Probable malate:quinone oxidoreductase from Prochlorococcus marinus subsp. pastoris (strain CCMP1986 / NIES-2087 / MED4).